A 207-amino-acid polypeptide reads, in one-letter code: Small ribosomal subunit protein uS4A (207 aa).

In terms of domain architecture, S4 RNA-binding spans 98–161; the sequence is RRLDNVVYRM…REHKRIKELA (64 aa).

The protein belongs to the universal ribosomal protein uS4 family. As to quaternary structure, part of the 30S ribosomal subunit. Contacts protein S5. The interaction surface between S4 and S5 is involved in control of translational fidelity.

Its function is as follows. One of the primary rRNA binding proteins, it binds directly to 16S rRNA where it nucleates assembly of the body of the 30S subunit. With S5 and S12 plays an important role in translational accuracy. The protein is Small ribosomal subunit protein uS4A of Symbiobacterium thermophilum (strain DSM 24528 / JCM 14929 / IAM 14863 / T).